A 584-amino-acid chain; its full sequence is Membrane frizzled-related protein (584 aa).

At 1-69 the chain is on the cytoplasmic side; the sequence is MKDYDDVILR…QPDCHFSWFC (69 aa). The helical; Signal-anchor for type II membrane protein transmembrane segment at 70–90 threads the bilayer; the sequence is ILLLSGLLLLLLGLLVAVILA. The Extracellular segment spans residues 91 to 584; sequence QLQATSLPRT…AASLEACSQP (494 aa). Residues 108-140 are disordered; it reads RGLTPMGVIPSTTPNTTTTTTTTTPARTGQQEA. Residues 119-132 are compositionally biased toward low complexity; it reads TTPNTTTTTTTTTP. 2 disulfides stabilise this stretch: C150/C176 and C203/C222. Residues 150-259 enclose the CUB 1 domain; that stretch reads CGGLLPGPSG…SGFQAWYQAV (110 aa). The N-linked (GlcNAc...) asparagine glycan is linked to N233. The LDL-receptor class A 1 domain occupies 265–301; that stretch reads SCAHNEFHCDLLLCLKRDSVCDGITECADGSDEANCS. 5 cysteine pairs are disulfide-bonded: C266–C278, C273–C291, C285–C300, C307–C333, and C360–C383. The CUB 2 domain maps to 307–420; sequence CGGNLTGLYG…GGFLATYQAI (114 aa). Residue N421 is glycosylated (N-linked (GlcNAc...) asparagine). The 35-residue stretch at 426-460 folds into the LDL-receptor class A 2 domain; sequence GCPWAEFCQSGGYRDLQWMCDLWKDCANDSNDNCS. 7 disulfide bridges follow: C433/C451, C445/C459, C471/C533, C479/C526, C517/C554, C543/C581, and C547/C569. N-linked (GlcNAc...) asparagine glycosylation occurs at N458. The region spanning 466–584 is the FZ domain; the sequence is QPDLTCEPVQ…AASLEACSQP (119 aa).

Interacts with C1QTNF5. Expressed in retinal pigment epithelium and ciliary epithelium of the eye.

Its subcellular location is the apical cell membrane. In terms of biological role, may play a role in eye development. The protein is Membrane frizzled-related protein (Mfrp) of Mus musculus (Mouse).